The sequence spans 1413 residues: DNA-directed RNA polymerase subunit beta' (1413 aa).

Residues C70, C72, C85, and C88 each contribute to the Zn(2+) site. Mg(2+) contacts are provided by D460, D462, and D464. C819, C893, C900, and C903 together coordinate Zn(2+). Positions 1392–1413 are disordered; that stretch reads EEAFDFGTPSAPAEEPQHPAAE.

This sequence belongs to the RNA polymerase beta' chain family. As to quaternary structure, the RNAP catalytic core consists of 2 alpha, 1 beta, 1 beta' and 1 omega subunit. When a sigma factor is associated with the core the holoenzyme is formed, which can initiate transcription. Mg(2+) serves as cofactor. Requires Zn(2+) as cofactor.

It catalyses the reaction RNA(n) + a ribonucleoside 5'-triphosphate = RNA(n+1) + diphosphate. DNA-dependent RNA polymerase catalyzes the transcription of DNA into RNA using the four ribonucleoside triphosphates as substrates. This is DNA-directed RNA polymerase subunit beta' from Burkholderia cenocepacia (strain ATCC BAA-245 / DSM 16553 / LMG 16656 / NCTC 13227 / J2315 / CF5610) (Burkholderia cepacia (strain J2315)).